The chain runs to 389 residues: Chaperone protein DnaJ (389 aa).

The region spanning 6–70 (DYYEVLGLAK…QKKAAYDQYG (65 aa)) is the J domain. The CR-type zinc-finger motif lies at 142–224 (GVEKEIKYNR…CHGTGHEKKA (83 aa)). Zn(2+) is bound by residues C155, C158, C172, C175, C198, C201, C212, and C215. CXXCXGXG motif repeat units follow at residues 155-162 (CATCGGNG), 172-179 (CHKCHGSG), 198-205 (CDVCHGTG), and 212-219 (CPTCHGTG).

It belongs to the DnaJ family. Homodimer. Zn(2+) serves as cofactor.

Its subcellular location is the cytoplasm. In terms of biological role, participates actively in the response to hyperosmotic and heat shock by preventing the aggregation of stress-denatured proteins and by disaggregating proteins, also in an autonomous, DnaK-independent fashion. Unfolded proteins bind initially to DnaJ; upon interaction with the DnaJ-bound protein, DnaK hydrolyzes its bound ATP, resulting in the formation of a stable complex. GrpE releases ADP from DnaK; ATP binding to DnaK triggers the release of the substrate protein, thus completing the reaction cycle. Several rounds of ATP-dependent interactions between DnaJ, DnaK and GrpE are required for fully efficient folding. Also involved, together with DnaK and GrpE, in the DNA replication of plasmids through activation of initiation proteins. The protein is Chaperone protein DnaJ of Enterococcus faecalis (strain ATCC 700802 / V583).